A 476-amino-acid polypeptide reads, in one-letter code: 2-(3-amino-3-carboxypropyl)histidine synthase subunit 2 (476 aa).

The segment covering 1-15 (MTESAPSAFFTTSTP) has biased composition (polar residues). Residues 1 to 24 (MTESAPSAFFTTSTPADHVHEEES) form a disordered region. Residues Cys-102, Cys-123, and Cys-347 each contribute to the [4Fe-4S] cluster site. A disordered region spans residues 451 to 476 (DGVSTAEDSTKMGEGRSGIAQGYSGK).

Belongs to the DPH1/DPH2 family. DPH2 subfamily. As to quaternary structure, component of the 2-(3-amino-3-carboxypropyl)histidine synthase complex composed of dph-1, dph-2, dph-3 and a NADH-dependent reductase. [4Fe-4S] cluster is required as a cofactor.

It participates in protein modification; peptidyl-diphthamide biosynthesis. In terms of biological role, required for the first step of diphthamide biosynthesis, a post-translational modification of histidine which occurs in elongation factor 2. Dph-1 and dph-2 transfer a 3-amino-3-carboxypropyl (ACP) group from S-adenosyl-L-methionine (SAM) to a histidine residue, the reaction is assisted by a reduction system comprising dph-3 and a NADH-dependent reductase. Facilitates the reduction of the catalytic iron-sulfur cluster found in the dph-1 subunit. The polypeptide is 2-(3-amino-3-carboxypropyl)histidine synthase subunit 2 (dph-2) (Caenorhabditis elegans).